Reading from the N-terminus, the 286-residue chain is Mating type protein A-1 (286 aa).

The alpha box DNA-binding region spans 40-95 (AAKKKVNGFMSFRSYYSPLFSQLPQKERSPFMTILWQHDPFHNEWNFMCSVYSSIR).

It belongs to the MATALPHA1 family.

It is found in the nucleus. In terms of biological role, required for expression of the heterokaryon incompatibility and sexual functions. In Neurospora africana, this protein is Mating type protein A-1 (MTA-1).